The primary structure comprises 677 residues: MDDPDCDSTWEEDEEDAEDAEDEDCEDGEAAGARDADAGDEDEESEEPRAARPSSFQSRMTGSRNWRATRDMCRYRHNYPDLVERDCNGDTPNLSFYRNEIRFLPNGCFIEDILQNWTDNYDLLEDNHSYIQWLFPLREPGVNWHAKPLTLREVEVFKSSQEIQERLVRAYELMLGFYGIRLEDRGTGTVGRAQNYQKRFQNLNWRSHNNLRITRILKSLGELGLEHFQAPLVRFFLEETLVRRELPGVRQSALDYFMFAVRCRHQRRQLVHFAWEHFRPRCKFVWGPQDKLRRFKPSSLPHPLEGSRKVEEEGSPGDPDHEASTQGRTCGPEHSKGGGRVDEGPQPRSVEPQDAGPLERSQGDEAGGHGEDRPEPLSPKESKKRKLELSRREQPPTEPGPQSASEVEKIALNLEGCALSQGSLRTGTQEVGGQDPGEAVQPCRQPLGARVADKVRKRRKVDEGAGDSAAVASGGAQTLALAGSPAPSGHPKAGHSENGVEEDTEGRTGPKEGTPGSPSETPGPSPAGPAGDEPAESPSETPGPRPAGPAGDEPAESPSETPGPRPAGPAGDEPAESPSETPGPSPAGPTRDEPAESPSETPGPRPAGPAGDEPAESPSETPGPRPAGPAGDEPAESPSETPGPSPAGPTRDEPAKAGEAAELQDAEVESSAKSGKP.

Residue Met-1 is modified to N-acetylmethionine. Over residues Met-1–Glu-29 the composition is skewed to acidic residues. The segment at Met-1 to Ser-63 is disordered. The segment covering Ser-54–Ser-63 has biased composition (polar residues). The Bipartite nuclear localization signal signature appears at Arg-267 to Lys-283. Residues Phe-295 to Val-407 form a disordered region. Phosphoserine is present on residues Ser-299 and Ser-315. 2 stretches are compositionally biased toward basic and acidic residues: residues Glu-305 to Ala-323 and Gly-331 to Pro-345. Phosphoserine occurs at positions 349, 361, 378, 382, 403, and 420. Over residues Ser-361–Pro-395 the composition is skewed to basic and acidic residues. Positions Gln-421–Val-431 are enriched in polar residues. A disordered region spans residues Gln-421–Pro-677. A compositionally biased stretch (low complexity) spans Gly-466–Ala-476. Ser-484 is modified (phosphoserine). 7 repeat units span residues Ser-517–Glu-536, Ser-537–Glu-556, Ser-557–Glu-576, Ser-577–Glu-596, Ser-597–Glu-616, Ser-617–Glu-636, and Ser-637–Lys-656. A 7 X 20 AA approximate tandem repeats of [ST]-P-S-E-T-P-G-P-[SR]-P-A-G-P-[AT]-[GR]-D-E-P-A-[EK] region spans residues Ser-517–Lys-656. A compositionally biased stretch (low complexity) spans Gly-528–Pro-538. Phosphoserine occurs at positions 537 and 557. Phosphoserine occurs at positions 617 and 637.

This sequence belongs to the opioid growth factor receptor family. Highly expressed in the heart and liver, moderately in skeletal muscle and kidney and to a lesser extent in brain and pancreas. Expressed in fetal tissues including liver and kidney.

It is found in the cytoplasm. The protein resides in the nucleus. Its function is as follows. Receptor for opioid growth factor (OGF), also known as Met-enkephalin. Seems to be involved in growth regulation. The sequence is that of Opioid growth factor receptor (OGFR) from Homo sapiens (Human).